Reading from the N-terminus, the 481-residue chain is GDP-fucose protein O-fucosyltransferase 3 (481 aa).

The Cytoplasmic segment spans residues 1 to 8; it reads MVRFQRRK. A helical; Signal-anchor for type II membrane protein membrane pass occupies residues 9-31; the sequence is LLASCLCVTATVFLMVTLQVVVE. Topologically, residues 32–481 are lumenal; it reads LGKFERKKLK…EEFWALVFKD (450 aa). Residues Asn-110, Asn-168, and Asn-318 are each glycosylated (N-linked (GlcNAc...) asparagine). A disulfide bridge connects residues Cys-389 and Cys-392. Asn-468 is a glycosylation site (N-linked (GlcNAc...) asparagine).

It belongs to the glycosyltransferase 10 family. As to expression, widely expressed, with a higher expression in liver and thymus.

It is found in the endoplasmic reticulum membrane. It carries out the reaction L-threonyl-[protein] + GDP-beta-L-fucose = 3-O-(alpha-L-fucosyl)-L-threonyl-[protein] + GDP + H(+). The enzyme catalyses L-seryl-[protein] + GDP-beta-L-fucose = 3-O-(alpha-L-fucosyl)-L-seryl-[protein] + GDP + H(+). The protein operates within protein modification; protein glycosylation. Functionally, protein O-fucosyltransferase that specifically catalyzes O-fucosylation of serine or threonine residues in EMI domains of target proteins, such as MMRN1, MMRN2 and EMID1. Attaches fucose through an O-glycosidic linkage. O-fucosylation of EMI domain-containing proteins may be required for facilitating protein folding and secretion. May also show alpha-(1,3)-fucosyltransferase activity toward the innermost N-acetyl glucosamine (GlcNAc) residue in biantennary N-glycan acceptors. However, this was tested with a library of synthetic substrates and this activity is unsure in vivo. May be involved in biosynthesis of Lewis X-carrying biantennary N-glycans that regulate neuron stem cell self-renewal during brain development. This chain is GDP-fucose protein O-fucosyltransferase 3, found in Mus musculus (Mouse).